Consider the following 491-residue polypeptide: Ketol-acid reductoisomerase (NADP(+)) (491 aa).

The region spanning 15 to 208 is the KARI N-terminal Rossmann domain; sequence AQLGKCRFMG…GGHRAGVLES (194 aa). Residues 45–48, arginine 68, arginine 76, serine 78, and 108–110 contribute to the NADP(+) site; these read CGAQ and DKQ. Residue histidine 132 is part of the active site. Glycine 158 is an NADP(+) binding site. 2 KARI C-terminal knotted domains span residues 209–344 and 345–484; these read SFVA…TAPQ and YEGK…MTDM. Residues aspartate 217, glutamate 221, glutamate 389, and glutamate 393 each contribute to the Mg(2+) site. Residue serine 414 coordinates substrate.

It belongs to the ketol-acid reductoisomerase family. Requires Mg(2+) as cofactor.

The enzyme catalyses (2R)-2,3-dihydroxy-3-methylbutanoate + NADP(+) = (2S)-2-acetolactate + NADPH + H(+). The catalysed reaction is (2R,3R)-2,3-dihydroxy-3-methylpentanoate + NADP(+) = (S)-2-ethyl-2-hydroxy-3-oxobutanoate + NADPH + H(+). It participates in amino-acid biosynthesis; L-isoleucine biosynthesis; L-isoleucine from 2-oxobutanoate: step 2/4. Its pathway is amino-acid biosynthesis; L-valine biosynthesis; L-valine from pyruvate: step 2/4. In terms of biological role, involved in the biosynthesis of branched-chain amino acids (BCAA). Catalyzes an alkyl-migration followed by a ketol-acid reduction of (S)-2-acetolactate (S2AL) to yield (R)-2,3-dihydroxy-isovalerate. In the isomerase reaction, S2AL is rearranged via a Mg-dependent methyl migration to produce 3-hydroxy-3-methyl-2-ketobutyrate (HMKB). In the reductase reaction, this 2-ketoacid undergoes a metal-dependent reduction by NADPH to yield (R)-2,3-dihydroxy-isovalerate. The sequence is that of Ketol-acid reductoisomerase (NADP(+)) from Citrobacter koseri (strain ATCC BAA-895 / CDC 4225-83 / SGSC4696).